A 360-amino-acid polypeptide reads, in one-letter code: S-adenosylmethionine:tRNA ribosyltransferase-isomerase (360 aa).

This sequence belongs to the QueA family. As to quaternary structure, monomer.

It is found in the cytoplasm. It carries out the reaction 7-aminomethyl-7-carbaguanosine(34) in tRNA + S-adenosyl-L-methionine = epoxyqueuosine(34) in tRNA + adenine + L-methionine + 2 H(+). It participates in tRNA modification; tRNA-queuosine biosynthesis. Its function is as follows. Transfers and isomerizes the ribose moiety from AdoMet to the 7-aminomethyl group of 7-deazaguanine (preQ1-tRNA) to give epoxyqueuosine (oQ-tRNA). The protein is S-adenosylmethionine:tRNA ribosyltransferase-isomerase of Rhodopseudomonas palustris (strain TIE-1).